A 274-amino-acid polypeptide reads, in one-letter code: Mitochondrial outer membrane protein porin 3 (274 aa).

The residue at position 76 (Ser76) is a Phosphoserine.

Belongs to the eukaryotic mitochondrial porin (TC 1.B.8.1) family. In terms of assembly, interacts with KIN14F/KP1. Interacts with FBA6 and GAPC1. In terms of tissue distribution, expressed in leaf tips, anthers and stigma.

The protein localises to the cell membrane. The protein resides in the mitochondrion outer membrane. In terms of biological role, forms a channel through the mitochondrial outer membrane that allows diffusion of small hydrophilic molecules. The channel adopts an open conformation at low or zero membrane potential and a closed conformation at potentials above 30-40 mV. The open state has a weak anion selectivity whereas the closed state is cation-selective. This chain is Mitochondrial outer membrane protein porin 3 (VDAC3), found in Arabidopsis thaliana (Mouse-ear cress).